The chain runs to 166 residues: Ubiquitin-conjugating enzyme E2-18 kDa (166 aa).

Positions Met5 to Gly165 constitute a UBC core domain. Catalysis depends on Cys90, which acts as the Glycyl thioester intermediate. Cys90 participates in a covalent cross-link: Glycyl cysteine thioester (Cys-Gly) (interchain with G-Cter in ubiquitin).

The protein belongs to the ubiquitin-conjugating enzyme family. Autoubiquitinated at Cys-90; undergoes 'Lys-48'-linked polyubiquitination, which leads to proteasome-dependent protein degradation.

The catalysed reaction is S-ubiquitinyl-[E1 ubiquitin-activating enzyme]-L-cysteine + [E2 ubiquitin-conjugating enzyme]-L-cysteine = [E1 ubiquitin-activating enzyme]-L-cysteine + S-ubiquitinyl-[E2 ubiquitin-conjugating enzyme]-L-cysteine.. It functions in the pathway protein modification; protein ubiquitination. Catalyzes the covalent attachment of ubiquitin to other proteins. Functions in degradation of misfolded or regulated proteins localized in the endoplasmic reticulum (ER) lumen or membrane via the ubiquitin-proteasome system. Cognate E2 conjugating enzyme for the doa10 ubiquitin ligase complex, which is part of the ERAD-C pathway responsible for the rapid degradation of membrane proteins with misfolded cytoplasmic domains, and of the hrd1 ubiquitin ligase complex, which is part of the ERAD-L and ERAD-M pathways responsible for the rapid degradation of soluble lumenal and membrane proteins with misfolded lumenal domains (ERAD-L), or ER-membrane proteins with misfolded transmembrane domains (ERAD-M). Together with hrd1, required for the degradation of the transcription factor sre1 precursor in the absence of its binding partner scp1. Has a role in the formation of chromatin structures that influence the localization of transcriptional silencing factors. This chain is Ubiquitin-conjugating enzyme E2-18 kDa (ubc7), found in Schizosaccharomyces pombe (strain 972 / ATCC 24843) (Fission yeast).